Here is a 190-residue protein sequence, read N- to C-terminus: Acyl-acyl carrier protein thioesterase ATL3, chloroplastic (190 aa).

The transit peptide at 1–49 directs the protein to the chloroplast; that stretch reads MFLQVTGTATPAMPAVVFLNSWRRPLSIPLRSVKTFKPLAFFDLKGGKG. Asp66 is a catalytic residue.

This sequence belongs to the 4-hydroxybenzoyl-CoA thioesterase family. Highly expressed in stems and flowers and at lower levels in rosette leaves, cauline leaves and siliques.

It localises to the plastid. It is found in the chloroplast. Functionally, acyl-ACP thioesterase involved in the production of fatty acids and beta-keto fatty acids. Can produce fatty acids of long chain (14:1 and 16:1) and beta-keto fatty acids of medium to long chain (8:0, 10:0, 12:0, 12:1, 14:0 and 16:0) when expressed in a heterologous organism (E.coli). Possesses thioesterase activity for lauroyl-ACP (12:0-ACP) in vitro. May play a role in the generation of long fatty acids in the chloroplast. This chain is Acyl-acyl carrier protein thioesterase ATL3, chloroplastic, found in Arabidopsis thaliana (Mouse-ear cress).